A 519-amino-acid chain; its full sequence is Bifunctional NAD(P)H-hydrate repair enzyme Nnr (519 aa).

The NAD(P)H-hydrate epimerase stretch occupies residues 1–233; it reads MMRCGEGYPG…DIGIPPAAEI (233 aa). Residues 25–233 enclose the YjeF N-terminal domain; sequence MAAADINAEY…DIGIPPAAEI (209 aa). Residues 71 to 75 are NADPHX 1; for epimerase activity; that stretch reads GNGGD. K(+)-binding residues include Asn72 and Asp144. The interval 148–154 is NADPHX 1; for epimerase activity; the sequence is GTGVRGS. (6S)-NADPHX is bound at residue Asp177. Residue Ser180 participates in K(+) binding. A YjeF C-terminal domain is found at 235–515; the sequence is MGPGDLLRIP…DMIPSVMDPG (281 aa). The ADP-dependent (S)-NAD(P)H-hydrate dehydratase stretch occupies residues 235 to 519; the sequence is MGPGDLLRIP…SVMDPGFYGF (285 aa). Gly338 is a binding site for (6S)-NADPHX. Positions 389–395 are NADPHX 2; for dehydratase activity; the sequence is HMAEFSS. ADP contacts are provided by residues 428–432 and 447–456; these read KGRID and CPGMTVGGTG. Asp457 contributes to the (6S)-NADPHX binding site.

The protein in the N-terminal section; belongs to the NnrE/AIBP family. This sequence in the C-terminal section; belongs to the NnrD/CARKD family. It depends on K(+) as a cofactor.

The catalysed reaction is (6S)-NADHX + ADP = AMP + phosphate + NADH + H(+). It catalyses the reaction (6S)-NADPHX + ADP = AMP + phosphate + NADPH + H(+). It carries out the reaction (6R)-NADHX = (6S)-NADHX. The enzyme catalyses (6R)-NADPHX = (6S)-NADPHX. In terms of biological role, bifunctional enzyme that catalyzes the epimerization of the S- and R-forms of NAD(P)HX and the dehydration of the S-form of NAD(P)HX at the expense of ADP, which is converted to AMP. This allows the repair of both epimers of NAD(P)HX, a damaged form of NAD(P)H that is a result of enzymatic or heat-dependent hydration. The protein is Bifunctional NAD(P)H-hydrate repair enzyme Nnr (nnr) of Methanothermobacter thermautotrophicus (strain ATCC 29096 / DSM 1053 / JCM 10044 / NBRC 100330 / Delta H) (Methanobacterium thermoautotrophicum).